Reading from the N-terminus, the 92-residue chain is SPbeta prophage-derived DNA-binding protein HU 2 (92 aa).

At Thr4 the chain carries Phosphothreonine. The disordered stretch occupies residues 55-77 (RAARKGRNPQTGEEIDIPATKAP).

It belongs to the bacterial histone-like protein family. As to quaternary structure, homodimer.

In terms of biological role, histone-like DNA-binding protein which is capable of wrapping DNA to stabilize it, and thus to prevent its denaturation under extreme environmental conditions. The polypeptide is SPbeta prophage-derived DNA-binding protein HU 2 (hup2) (Bacillus subtilis (strain 168)).